A 725-amino-acid chain; its full sequence is Eukaryotic translation initiation factor 3 subunit B (725 aa).

Phosphoserine is present on S23. In terms of domain architecture, RRM spans 39-129; the sequence is TVVVIEGAPV…HTFVVRKLNQ (91 aa). Position 135 is a phosphoserine (S135). T136 is subject to Phosphothreonine. WD repeat units follow at residues 190 to 229, 304 to 344, and 347 to 386; these read DREN…MCAR, DGKK…LVDK, and IKID…QPAR. The stretch at 630 to 671 forms a coiled coil; the sequence is LTKEDMKKIRKKLKDYNRLFDEEDIAEQSSANRELAARRRQL.

The protein belongs to the eIF-3 subunit B family. Component of the eukaryotic translation initiation factor 3 (eIF-3) complex. The eIF-3 complex appears to include tif32/eif3a, SPAC25G10.08/eif3b, tif33/eif3c, SPBC4C3.07/eif3f, tif35/eif3g and sum1/eif3i. This set of common subunits may also associate exclusively with either moe1/eif3d and int6/eif3e, or with SPAC821.05/eif3h and SPAC1751.03/eif3m. The eIF-3 complex may also include SPAC3A12.13c/eif3j.

Its subcellular location is the cytoplasm. RNA-binding component of the eukaryotic translation initiation factor 3 (eIF-3) complex, which is involved in protein synthesis of a specialized repertoire of mRNAs and, together with other initiation factors, stimulates binding of mRNA and methionyl-tRNAi to the 40S ribosome. The eIF-3 complex specifically targets and initiates translation of a subset of mRNAs involved in cell proliferation. The polypeptide is Eukaryotic translation initiation factor 3 subunit B (Schizosaccharomyces pombe (strain 972 / ATCC 24843) (Fission yeast)).